The primary structure comprises 896 residues: NEDD4-binding protein 1 (896 aa).

Positions 59–143 constitute a KH-like domain; the sequence is QEAVHSAKEY…IQQFVKLFEN (85 aa). At S226 the chain carries Phosphoserine. T242 is subject to Phosphothreonine. S258 and S300 each carry phosphoserine. 2 disordered regions span residues 403 to 430 and 488 to 507; these read YPETNKTKNKGVYSSTNELTTDSTPKKT and ETDGLSPSVASPSPKEVNFV. Polar residues predominate over residues 414–430; that stretch reads VYSSTNELTTDSTPKKT. Phosphoserine is present on S562. One can recognise an RNase NYN domain in the interval 617 to 769; that stretch reads LKHIVIDGSN…LGRSGPRLEE (153 aa). Residues 801–821 are disordered; sequence GTQAASTSHQPPTRIQGAPSS. Residues 803 to 813 are compositionally biased toward polar residues; sequence QAASTSHQPPT. Residues 849–896 are coCUN; it reads RSSAETNELREALLKIFPDSEQRLKIDQILVAHPYMKDLNALSAMVLD.

It belongs to the N4BP1 family. As to quaternary structure, interacts with NEDD4. Interacts with ITCH (via WW domain 2). In terms of processing, proteolytically cleaved by CASP8 downstream of TLR3 or TLR4, leading to its inactivation. Mainly cleaved at Asp-490 by CASP8. Cleaved by caspase-like protein MALT1 in T-cells following TCR-mediated activation, leading to its inactivation and subsequent viral reactivation during HIV-1 infection. Mono- and polyubiquitinated on the CoCUN region. Monoubiquitinated by NEDD4. Polyubiquitinated, leading to its degradation by the proteasome. Sumoylated with SUMO1, abrogating polyubiquitination and subsequent degradation. Desumoylated by SENP1, leading to accumulation in PML nuclear bodies. Detected in heart, lung, brain, liver, skeletal muscle, pancreas, kidney, spleen, testis and ovary.

It is found in the cytoplasm. The protein localises to the cytosol. Its subcellular location is the nucleus. The protein resides in the nucleolus. It localises to the PML body. With respect to regulation, proteolytic cleavage by CASP8 or MALT1 leads to its inactivation. Potent suppressor of cytokine production that acts as a regulator of innate immune signaling and inflammation. Acts as a key negative regulator of select cytokine and chemokine responses elicited by TRIF-independent Toll-like receptors (TLRs), thereby limiting inflammatory cytokine responses to minor insults. In response to more threatening pathogens, cleaved by CASP8 downstream of TLR3 or TLR4, leading to its inactivation, thereby allowing production of inflammatory cytokines. Acts as a restriction factor against some viruses, such as HIV-1: restricts HIV-1 replication by binding to HIV-1 mRNAs and mediating their degradation via its ribonuclease activity. Also acts as an inhibitor of the E3 ubiquitin-protein ligase ITCH: acts by interacting with the second WW domain of ITCH, leading to compete with ITCH's substrates and impairing ubiquitination of substrates. This chain is NEDD4-binding protein 1, found in Homo sapiens (Human).